A 51-amino-acid chain; its full sequence is Insulin (51 aa).

3 disulfide bridges follow: C7/C37, C19/C50, and C36/C41.

This sequence belongs to the insulin family. Heterodimer of a B chain and an A chain linked by two disulfide bonds.

The protein resides in the secreted. Its function is as follows. Insulin decreases blood glucose concentration. It increases cell permeability to monosaccharides, amino acids and fatty acids. It accelerates glycolysis, the pentose phosphate cycle, and glycogen synthesis in liver. In Hystrix cristata (North African crested porcupine), this protein is Insulin (INS).